We begin with the raw amino-acid sequence, 525 residues long: NAD(P)H-quinone oxidoreductase chain 4 1 (525 aa).

The next 14 helical transmembrane spans lie at 6 to 26 (FPWL…IPII), 36 to 56 (WYAL…FYTS), 91 to 111 (LIIL…PVTL), 115 to 135 (LFYF…AVQD), 136 to 156 (LLLF…LLAI), 169 to 189 (FILY…TMAF), 212 to 232 (LLLY…IPLH), 243 to 263 (TAPA…YALI), 277 to 297 (FAPV…LTSF), 314 to 334 (MGFV…GAVL), 335 to 355 (QMVS…ATYD), 375 to 397 (IFAM…GFVA), 417 to 437 (VIVV…LLSM), and 464 to 484 (VFVI…PKLL).

It belongs to the complex I subunit 4 family.

The protein resides in the cellular thylakoid membrane. The enzyme catalyses a plastoquinone + NADH + (n+1) H(+)(in) = a plastoquinol + NAD(+) + n H(+)(out). The catalysed reaction is a plastoquinone + NADPH + (n+1) H(+)(in) = a plastoquinol + NADP(+) + n H(+)(out). Functionally, NDH-1 shuttles electrons from NAD(P)H, via FMN and iron-sulfur (Fe-S) centers, to quinones in the respiratory chain. The immediate electron acceptor for the enzyme in this species is believed to be plastoquinone. Couples the redox reaction to proton translocation (for every two electrons transferred, four hydrogen ions are translocated across the cytoplasmic membrane), and thus conserves the redox energy in a proton gradient. In Trichormus variabilis (strain ATCC 29413 / PCC 7937) (Anabaena variabilis), this protein is NAD(P)H-quinone oxidoreductase chain 4 1.